Consider the following 319-residue polypeptide: Multivesicular body subunit 12B (319 aa).

A disordered region spans residues 1–50 (MRSCFCVRRSRDPPPPQPPPPPPQRGTDQSTMPEVKDLSEALPETSMDPI). The segment covering 13-24 (PPPPQPPPPPPQ) has biased composition (pro residues). Phosphoserine is present on residues Ser-46 and Ser-101. An MABP domain is found at 47 to 193 (MDPITGVGVV…SMGIWYRMGR (147 aa)). A phosphothreonine mark is found at Thr-122, Thr-204, and Thr-205. The disordered stretch occupies residues 195–222 (PRNHDSSQPTTPSQSSAASTPAPNLPRH). The segment covering 200–216 (SSQPTTPSQSSAASTPA) has biased composition (low complexity). At Ser-224 the chain carries Phosphoserine. A UMA domain is found at 254–303 (MDGVPFMISEKFSCVPESMQPFDLLGITIKSLAEIEKEYEYSFRTEQSAA). The tract at residues 299–319 (EQSAAARLPPSPTRCQQIPQS) is disordered. Ser-309 is subject to Phosphoserine.

The protein belongs to the MVB12 family. Component of the ESCRT-I complex (endosomal sorting complex required for transport I) which consists of TSG101, VPS28, a VPS37 protein (VPS37A to -D) and MVB12A or MVB12B in a 1:1:1:1 stoichiometry. Interacts with TSG101; the association appears to be mediated by the TSG101-VPS37 binary subcomplex. Interacts with VPS28. Interacts with VPS37B; the association appears to be mediated by the TSG101-VPS37 binary subcomplex. Interacts with VPS37C; the association appears to be mediated by the TSG101-VPS37 binary subcomplex.

The protein localises to the endosome. The protein resides in the late endosome membrane. Functionally, component of the ESCRT-I complex, a regulator of vesicular trafficking process. Required for the sorting of endocytic ubiquitinated cargos into multivesicular bodies. This chain is Multivesicular body subunit 12B (MVB12B), found in Homo sapiens (Human).